We begin with the raw amino-acid sequence, 253 residues long: Type III pantothenate kinase (253 aa).

An ATP-binding site is contributed by 6–13 (DVGNTNTV). 103-106 (GADR) contacts substrate. Catalysis depends on Asp-105, which acts as the Proton acceptor. Asp-125 is a K(+) binding site. Position 128 (Thr-128) interacts with ATP. Thr-180 serves as a coordination point for substrate.

This sequence belongs to the type III pantothenate kinase family. Homodimer. NH4(+) serves as cofactor. Requires K(+) as cofactor.

Its subcellular location is the cytoplasm. The enzyme catalyses (R)-pantothenate + ATP = (R)-4'-phosphopantothenate + ADP + H(+). The protein operates within cofactor biosynthesis; coenzyme A biosynthesis; CoA from (R)-pantothenate: step 1/5. Functionally, catalyzes the phosphorylation of pantothenate (Pan), the first step in CoA biosynthesis. The sequence is that of Type III pantothenate kinase from Parafrankia sp. (strain EAN1pec).